A 651-amino-acid polypeptide reads, in one-letter code: MSEKLYPVLPEAKKNTLIDNETYLEWYEESVSDPDGFWAKHGRRIDWFKPFTKVKNTDFNGDVTIKWYEDGVTNVSYNCIDRHLKSRGDKVAIIWEGDNPYIDKKITYRELYENVCRMANVLKKHGVKKGDRVTIYLPMIPEAAYAMLACARIGAVHSVVFAGFSPEALAGRIVDCESTFVITADEGVRGGKPVALKENTDTAIDIAAKQYVMVNKVLVVRRTGGKVSWGRGRDLWYHQEVASVEPHCEPEPMNAEDPLFILYTSGSTGKPKGVLHTTGGYLVYASMTHQYVFDYHDGEIYWCTADVGWVTGHSYIVYGPLANGATTLMFEGVPNFPDQGRFWEVVDKHHVNIFYTAPTALRALMGAGDEFVTRSSRSTLRLLGSVGEPINPEAWEWYYNVVGDQKCPIVDTWWQTENGGILITPLPGATDLKPGSATRPFFGVKPVLVDNEGNVQEGVADGNLCISDSWPGQMRTVYGDHKRFIETYFSTYKGMYFSGDGCRRDEDGYYWITGRVDDVLNISGHRLGTAEIESALVSHHSVSEAAVVGYPHPIKGQGIYCYVTLMTGADAQDPDELRKELVQHVRKEIGPIATPDKIQFAPGLPKTRSGKIMRRILRKIAEDEFGALGDTSTLADRGVVDDLIENRQNKK.

CoA is bound by residues 189 to 192 (RGGK), Thr311, and Asn335. ATP is bound by residues 387–389 (GEP), 411–416 (DTWWQT), Asp500, and Arg515. CoA is bound at residue Ser523. Arg526 provides a ligand contact to ATP. Mg(2+) is bound by residues Val537, His539, and Val542. Residue Arg586 coordinates CoA. N6-acetyllysine is present on Lys611.

Belongs to the ATP-dependent AMP-binding enzyme family. Requires Mg(2+) as cofactor. In terms of processing, acetylated. Deacetylation by the SIR2-homolog deacetylase activates the enzyme.

The catalysed reaction is acetate + ATP + CoA = acetyl-CoA + AMP + diphosphate. In terms of biological role, catalyzes the conversion of acetate into acetyl-CoA (AcCoA), an essential intermediate at the junction of anabolic and catabolic pathways. AcsA undergoes a two-step reaction. In the first half reaction, AcsA combines acetate with ATP to form acetyl-adenylate (AcAMP) intermediate. In the second half reaction, it can then transfer the acetyl group from AcAMP to the sulfhydryl group of CoA, forming the product AcCoA. This chain is Acetyl-coenzyme A synthetase, found in Brucella melitensis biotype 1 (strain ATCC 23456 / CCUG 17765 / NCTC 10094 / 16M).